The sequence spans 453 residues: UDP-N-acetylmuramoylalanine--D-glutamate ligase (453 aa).

120 to 126 (GSNGKST) is a binding site for ATP.

The protein belongs to the MurCDEF family.

The protein localises to the cytoplasm. It carries out the reaction UDP-N-acetyl-alpha-D-muramoyl-L-alanine + D-glutamate + ATP = UDP-N-acetyl-alpha-D-muramoyl-L-alanyl-D-glutamate + ADP + phosphate + H(+). The protein operates within cell wall biogenesis; peptidoglycan biosynthesis. Functionally, cell wall formation. Catalyzes the addition of glutamate to the nucleotide precursor UDP-N-acetylmuramoyl-L-alanine (UMA). The chain is UDP-N-acetylmuramoylalanine--D-glutamate ligase from Nitrosococcus oceani (strain ATCC 19707 / BCRC 17464 / JCM 30415 / NCIMB 11848 / C-107).